A 147-amino-acid polypeptide reads, in one-letter code: Cyanate hydratase (147 aa).

Catalysis depends on residues Arg-88, Glu-91, and Ser-114.

Belongs to the cyanase family.

The catalysed reaction is cyanate + hydrogencarbonate + 3 H(+) = NH4(+) + 2 CO2. Its function is as follows. Catalyzes the reaction of cyanate with bicarbonate to produce ammonia and carbon dioxide. The polypeptide is Cyanate hydratase (Polynucleobacter asymbioticus (strain DSM 18221 / CIP 109841 / QLW-P1DMWA-1) (Polynucleobacter necessarius subsp. asymbioticus)).